We begin with the raw amino-acid sequence, 387 residues long: Exodeoxyribonuclease 7 large subunit (387 aa).

The protein belongs to the XseA family. As to quaternary structure, heterooligomer composed of large and small subunits.

It localises to the cytoplasm. The enzyme catalyses Exonucleolytic cleavage in either 5'- to 3'- or 3'- to 5'-direction to yield nucleoside 5'-phosphates.. Its function is as follows. Bidirectionally degrades single-stranded DNA into large acid-insoluble oligonucleotides, which are then degraded further into small acid-soluble oligonucleotides. In Campylobacter fetus subsp. fetus (strain 82-40), this protein is Exodeoxyribonuclease 7 large subunit.